The chain runs to 747 residues: MLWIQPACLLSLIFSAHIAAVSIKHLLNGSDHDTDVGEQKDIFEINLAAGLNLFQGDILLPRTRNAMRDPSSRWKLPIPYILADNLELNAKGAILHAFEMFRLKSCVDFKPYEGESSYIIFQKLSGCWSMIGDQQVGQNISIGEGCDFKATIEHEILHALGFFHEQSRTDRDDYVNIWWDQIITDYEHNFNTYDDNTITDLNTPYDYESLMHYGPFSFNKNESIPTITTKIPEFNTIIGQLPDFSAIDLIRLNRMYNCTATHTLLDHCDFEKTNVCGMIQGTRDDADWAHGDSSQPEQVDHTLVGQCKGAGYFMFFNTSLGARGEAALLESRILYPKRKQQCLQFFYKMTGSPADRFEVWVRRDDNAGKVRQLAKIQTFQGDSDHNWKIAHVTLNEEKKFRYVFLGTKGDPGNSSGGIYLDDITLTETPCPAGVWTIRNISQILENTVKGDKLVSPRFYNSEGYGVGVTLYPNGRITSNSGFLGLTFHLYSGDNDAILEWPVENRQAIMTILDQEADTRNRMSLTLMFTTSKNQTSSAINGSVIWDRPSKVGVYDKDCDCFRSLDWGWGQAISHQLLKRRNFLKGDSLIIFVDFKDLTHLNRTEVPASARSTMPRGLLLQGQESPALGESSRKAMLEESLPSSLGQRHPSRQKRSVENTGPMEDHNWPQYFRDPCDPNPCQNEGTCVNVKGMASCRCVSGHAFFYAGERCQAMHVHGSLLGLLIGCIAGLIFLTFVTFSTTNGKLRQ.

A signal peptide spans 1-20; sequence MLWIQPACLLSLIFSAHIAA. Residues 21-64 constitute a propeptide that is removed on maturation; sequence VSIKHLLNGSDHDTDVGEQKDIFEINLAAGLNLFQGDILLPRTR. Residues N28 and N139 are each glycosylated (N-linked (GlcNAc...) asparagine). Residues 65–259 enclose the Peptidase M12A domain; that stretch reads NAMRDPSSRW…IRLNRMYNCT (195 aa). Residues 65 to 713 lie on the Extracellular side of the membrane; it reads NAMRDPSSRW…FYAGERCQAM (649 aa). 3 cysteine pairs are disulfide-bonded: C106–C258, C127–C146, and C268–C430. A Zn(2+)-binding site is contributed by H154. E155 is an active-site residue. Residues H158 and H164 each coordinate Zn(2+). N221, N257, N317, N413, N439, N533, and N540 each carry an N-linked (GlcNAc...) asparagine glycan. In terms of domain architecture, MAM spans 263–432; that stretch reads TLLDHCDFEK…ITLTETPCPA (170 aa). In terms of domain architecture, MATH spans 433–594; that stretch reads GVWTIRNISQ…GDSLIIFVDF (162 aa). The segment at 638–663 is disordered; that stretch reads ESLPSSLGQRHPSRQKRSVENTGPME. The 41-residue stretch at 671–711 folds into the EGF-like domain; sequence FRDPCDPNPCQNEGTCVNVKGMASCRCVSGHAFFYAGERCQ. 3 cysteine pairs are disulfide-bonded: C675/C686, C680/C695, and C697/C710. The chain crosses the membrane as a helical span at residues 714–741; that stretch reads HVHGSLLGLLIGCIAGLIFLTFVTFSTT. Residues 742–747 lie on the Cytoplasmic side of the membrane; it reads NGKLRQ.

As to quaternary structure, homotetramer consisting of disulfide-linked alpha subunits, homooligomer consisting of disulfide-linked alpha subunit homodimers, or heterotetramer of two alpha and two beta subunits formed by non-covalent association of two disulfide-linked heterodimers. Genetic factors determine which oligomer(s) will be formed (strain-specific). Interacts with MBL2 through its carbohydrate moiety. This interaction may inhibit its catalytic activity. The cofactor is Zn(2+). N-glycosylated; contains GlcNAc, galactose, mannose and a small amount of fucose. Kidney, intestinal brush borders and salivary ducts.

The protein resides in the membrane. The catalysed reaction is Hydrolysis of protein and peptide substrates preferentially on carboxyl side of hydrophobic residues.. With respect to regulation, inhibited by metal ion chelators EDTA and 1,10-phenanthroline, bradykinin analogs, cysteine, CONA65, and several hydroxamate compounds, particularly tyrosine hydroxamate. Not inhibited by 3,4-dichloroisocourmarin, soybean trypsin inhibitor, or the cysteine proteinase inhibitors iodoacetic acid and E-64. The chain is Meprin A subunit alpha (Mep1a) from Mus musculus (Mouse).